Reading from the N-terminus, the 458-residue chain is Cysteine--tRNA ligase (458 aa).

Position 29 (cysteine 29) interacts with Zn(2+). Residues 31-41 (MTVYDLCHLGH) carry the 'HIGH' region motif. Zn(2+) contacts are provided by cysteine 213, histidine 238, and glutamate 242. The short motif at 270–274 (KMSKS) is the 'KMSKS' region element. An ATP-binding site is contributed by lysine 273.

The protein belongs to the class-I aminoacyl-tRNA synthetase family. In terms of assembly, monomer. Zn(2+) is required as a cofactor.

The protein localises to the cytoplasm. It catalyses the reaction tRNA(Cys) + L-cysteine + ATP = L-cysteinyl-tRNA(Cys) + AMP + diphosphate. The chain is Cysteine--tRNA ligase from Acidovorax sp. (strain JS42).